We begin with the raw amino-acid sequence, 466 residues long: Cell division protein FtsP (466 aa).

Residues 1 to 28 (MNYSRRSLFKKTLIATALSALPATLLAA) constitute a signal peptide (tat-type signal).

The protein belongs to the FtsP family. Predicted to be exported by the Tat system. The position of the signal peptide cleavage has not been experimentally proven.

It localises to the periplasm. Functionally, cell division protein that is required for growth during stress conditions. May be involved in protecting or stabilizing the divisomal assembly under conditions of stress. The polypeptide is Cell division protein FtsP (Actinobacillus succinogenes (strain ATCC 55618 / DSM 22257 / CCUG 43843 / 130Z)).